Reading from the N-terminus, the 707-residue chain is Polyribonucleotide nucleotidyltransferase (707 aa).

Residues aspartate 486 and aspartate 492 each coordinate Mg(2+). A KH domain is found at 553–612 (PRIHKIKINPEKIKDVIGKGGSVIRMLTEETGTIIEIEDDGTIKISATIGEKAKNAIRRI). The S1 motif domain occupies 622–690 (GRIYSGKVTR…RQGRLRLSIK (69 aa)).

It belongs to the polyribonucleotide nucleotidyltransferase family. In terms of assembly, component of the RNA degradosome, which is a multiprotein complex involved in RNA processing and mRNA degradation. It depends on Mg(2+) as a cofactor.

The protein resides in the cytoplasm. The enzyme catalyses RNA(n+1) + phosphate = RNA(n) + a ribonucleoside 5'-diphosphate. Its function is as follows. Involved in mRNA degradation. Catalyzes the phosphorolysis of single-stranded polyribonucleotides processively in the 3'- to 5'-direction. This is Polyribonucleotide nucleotidyltransferase from Buchnera aphidicola subsp. Schizaphis graminum (strain Sg).